We begin with the raw amino-acid sequence, 474 residues long: tRNA-2-methylthio-N(6)-dimethylallyladenosine synthase (474 aa).

The region spanning 3–120 (KKLHIKTWGC…LPEMIEQVRR (118 aa)) is the MTTase N-terminal domain. [4Fe-4S] cluster contacts are provided by Cys12, Cys49, Cys83, Cys157, Cys161, and Cys164. Residues 143–375 (RAEGPTAFVS…QDRITQQAMR (233 aa)) form the Radical SAM core domain. The region spanning 378-441 (RHMMGTVQRI…TNSLRGKFIR (64 aa)) is the TRAM domain.

Belongs to the methylthiotransferase family. MiaB subfamily. As to quaternary structure, monomer. [4Fe-4S] cluster serves as cofactor.

The protein localises to the cytoplasm. It catalyses the reaction N(6)-dimethylallyladenosine(37) in tRNA + (sulfur carrier)-SH + AH2 + 2 S-adenosyl-L-methionine = 2-methylsulfanyl-N(6)-dimethylallyladenosine(37) in tRNA + (sulfur carrier)-H + 5'-deoxyadenosine + L-methionine + A + S-adenosyl-L-homocysteine + 2 H(+). Functionally, catalyzes the methylthiolation of N6-(dimethylallyl)adenosine (i(6)A), leading to the formation of 2-methylthio-N6-(dimethylallyl)adenosine (ms(2)i(6)A) at position 37 in tRNAs that read codons beginning with uridine. This chain is tRNA-2-methylthio-N(6)-dimethylallyladenosine synthase, found in Shewanella oneidensis (strain ATCC 700550 / JCM 31522 / CIP 106686 / LMG 19005 / NCIMB 14063 / MR-1).